A 622-amino-acid chain; its full sequence is 1-deoxy-D-xylulose-5-phosphate synthase (622 aa).

Residues histidine 71 and 112–114 (GHS) contribute to the thiamine diphosphate site. Residue aspartate 143 participates in Mg(2+) binding. Residues 144-145 (GA), asparagine 172, tyrosine 283, and glutamate 363 each bind thiamine diphosphate. Asparagine 172 is a binding site for Mg(2+).

It belongs to the transketolase family. DXPS subfamily. As to quaternary structure, homodimer. Requires Mg(2+) as cofactor. It depends on thiamine diphosphate as a cofactor.

It catalyses the reaction D-glyceraldehyde 3-phosphate + pyruvate + H(+) = 1-deoxy-D-xylulose 5-phosphate + CO2. It participates in metabolic intermediate biosynthesis; 1-deoxy-D-xylulose 5-phosphate biosynthesis; 1-deoxy-D-xylulose 5-phosphate from D-glyceraldehyde 3-phosphate and pyruvate: step 1/1. Functionally, catalyzes the acyloin condensation reaction between C atoms 2 and 3 of pyruvate and glyceraldehyde 3-phosphate to yield 1-deoxy-D-xylulose-5-phosphate (DXP). The polypeptide is 1-deoxy-D-xylulose-5-phosphate synthase (Caldanaerobacter subterraneus subsp. tengcongensis (strain DSM 15242 / JCM 11007 / NBRC 100824 / MB4) (Thermoanaerobacter tengcongensis)).